A 428-amino-acid chain; its full sequence is Arabinosyltransferase RRA2 (428 aa).

Residues 1–15 lie on the Cytoplasmic side of the membrane; that stretch reads MAGRRDRIQQLRGSR. Residues 16 to 36 form a helical; Signal-anchor for type II membrane protein membrane-spanning segment; sequence IAIAIFVGILIGCVCSVLFPN. The Lumenal segment spans residues 37-428; sequence GFFNSGSSLI…ALDSFPDGSD (392 aa). The DXD motif motif lies at 250–252; that stretch reads DVD. The N-linked (GlcNAc...) asparagine glycan is linked to asparagine 278.

Belongs to the glycosyltransferase 77 family. Expressed in roots, rosette and cauline leaves, stems, flowers and siliques.

Its subcellular location is the golgi apparatus membrane. Functionally, plays a role in the arabinosylation of cell wall components. Involved in the arabinosylation of extensin proteins in root hair cells. Extensins are structural glycoproteins present in cell walls and its arabinosylation is important for root hair cell development. The protein is Arabinosyltransferase RRA2 of Arabidopsis thaliana (Mouse-ear cress).